Reading from the N-terminus, the 491-residue chain is Cobyric acid synthase (491 aa).

Residues P249–F439 enclose the GATase cobBQ-type domain. C329 functions as the Nucleophile in the catalytic mechanism. H431 is a catalytic residue.

It belongs to the CobB/CobQ family. CobQ subfamily.

It participates in cofactor biosynthesis; adenosylcobalamin biosynthesis. Its function is as follows. Catalyzes amidations at positions B, D, E, and G on adenosylcobyrinic A,C-diamide. NH(2) groups are provided by glutamine, and one molecule of ATP is hydrogenolyzed for each amidation. In Clostridium tetani (strain Massachusetts / E88), this protein is Cobyric acid synthase.